A 185-amino-acid polypeptide reads, in one-letter code: Intraflagellar transport protein 22 homolog (185 aa).

GTP contacts are provided by residues 10–17, 63–67, and 123–126; these read GPCESGKT, DCGGD, and HKPG. Serine 137 carries the post-translational modification Phosphoserine.

Belongs to the small GTPase superfamily. Rab family. In terms of assembly, component of the IFT complex B, at least composed of IFT20, IFT22, IFT25, IFT27, IFT46, IFT52, TRAF3IP1/IFT54, IFT57, IFT74, IFT80, IFT81, and IFT88. Interacts with IFT88. Interacts with CFAP61.

The protein localises to the cell projection. It is found in the cilium. Its function is as follows. Small GTPase-like component of the intraflagellar transport (IFT) complex B. The protein is Intraflagellar transport protein 22 homolog (Ift22) of Rattus norvegicus (Rat).